The sequence spans 912 residues: Vomeronasal type-2 receptor 1 (912 aa).

Positions 1-21 (MASRQISLALGFLAFLWAVLG) are cleaved as a signal peptide. Residues 22–623 (AQNKTEEVQC…LAYGEALGFT (602 aa)) are Extracellular-facing. Asn-24, Asn-38, Asn-299, and Asn-386 each carry an N-linked (GlcNAc...) asparagine glycan. The helical transmembrane segment at 624 to 644 (LVILSIFGALVVLAVTVVYVI) threads the bilayer. The Cytoplasmic portion of the chain corresponds to 645-657 (HRHTPLVKANDRE). Residues 658-678 (LSFLIQMSLVITVLSSLLFIG) traverse the membrane as a helical segment. The Extracellular portion of the chain corresponds to 679–691 (KPCNWSCMARQIT). The helical transmembrane segment at 692 to 712 (LALGFCLCLSSILGKTISLFF) threads the bilayer. Topologically, residues 713–732 (AYRISVSKTRLISMHPIFRK) are cytoplasmic. Residues 733–753 (LIVLVCVVGEIGVCAAYLVLE) traverse the membrane as a helical segment. At 754–778 (PPRMFKNIEIQNVKIIFECNEGSVE) the chain is on the extracellular side. A helical membrane pass occupies residues 779–799 (FLCSIFGFDVLRALLCFLTTF). Residues 800 to 812 (VARQLPDNYYEGK) lie on the Cytoplasmic side of the membrane. The chain crosses the membrane as a helical span at residues 813 to 833 (CITFGMLVFFIVWISFVPAYL). Residues 834–840 (STKGKFK) lie on the Extracellular side of the membrane. The helical transmembrane segment at 841–861 (VAVEIFAILASSYGLLGCLFL) threads the bilayer. Residues 862–912 (PKCFIILLRPKRNTDETVGGRVPTVDRSIQLTSASVSSELNSTTVSTVLDE) are Cytoplasmic-facing.

The protein belongs to the G-protein coupled receptor 3 family. In terms of tissue distribution, expressed at the sensory surface of the vomeronasal organ.

It localises to the cell membrane. In terms of biological role, putative pheromone receptor. This chain is Vomeronasal type-2 receptor 1 (Vmn2r1), found in Mus musculus (Mouse).